Reading from the N-terminus, the 103-residue chain is Sec-independent protein translocase protein TatA (103 aa).

A helical transmembrane segment spans residues 1–21 (MGNIFSPTHLIVILLIVLVLF). A disordered region spans residues 60 to 103 (YSKTTDVRPQQSQPLSVKRAAERRKGSSSFKEGKASVAKKQRGK).

It belongs to the TatA/E family. The Tat system comprises two distinct complexes: a TatABC complex, containing multiple copies of TatA, TatB and TatC subunits, and a separate TatA complex, containing only TatA subunits. Substrates initially bind to the TatABC complex, which probably triggers association of the separate TatA complex to form the active translocon.

The protein resides in the cell inner membrane. In terms of biological role, part of the twin-arginine translocation (Tat) system that transports large folded proteins containing a characteristic twin-arginine motif in their signal peptide across membranes. TatA could form the protein-conducting channel of the Tat system. The protein is Sec-independent protein translocase protein TatA of Bartonella quintana (strain Toulouse) (Rochalimaea quintana).